A 613-amino-acid polypeptide reads, in one-letter code: Thioredoxin reductase 1, cytoplasmic (613 aa).

Residues 58 to 121 are disordered; the sequence is AVLPASRPSK…LPTMNGSKDP (64 aa). Positions 65–74 are enriched in polar residues; the sequence is PSKTLPSSSQ. FAD is bound by residues 136–137, 156–157, 172–173, and 177–181; these read SG, DF, TC, and GCIPK. An intrachain disulfide couples Cys173 to Cys178. Lys182 carries the post-translational modification N6-succinyllysine. Tyr245 carries the post-translational modification Phosphotyrosine. FAD is bound by residues 245–246 and Thr275; that span reads YG. Residues Arg280, 312–318, 335–336, Arg340, 340–342, 406–407, and Lys429 each bind NADP(+); these read ASYVALE, RS, RGF, and GR. Tyr314 lines the FAD pocket. Residues Asp448, 455-457, and His586 each bind FAD; that span reads ELT. Glu455 is an NADP(+) binding site. Catalysis depends on His586, which acts as the Proton acceptor. The segment at residues 611-612 is a cross-link (cysteinyl-selenocysteine (Cys-Sec)); the sequence is CU. A non-standard amino acid (selenocysteine) is located at residue Sec612.

The protein belongs to the class-I pyridine nucleotide-disulfide oxidoreductase family. Homodimer. FAD is required as a cofactor. ISGylated.

It is found in the cytoplasm. It carries out the reaction [thioredoxin]-dithiol + NADP(+) = [thioredoxin]-disulfide + NADPH + H(+). The catalysed reaction is H2O2 + NADPH + H(+) = NADP(+) + 2 H2O. Functionally, reduces disulfideprotein thioredoxin (Trx) to its dithiol-containing form. Homodimeric flavoprotein involved in the regulation of cellular redox reactions, growth and differentiation. Contains a selenocysteine residue at the C-terminal active site that is essential for catalysis. Also has reductase activity on hydrogen peroxide (H2O2). This Mus musculus (Mouse) protein is Thioredoxin reductase 1, cytoplasmic.